The primary structure comprises 327 residues: FERM domain-containing protein 6 (327 aa).

The FERM domain occupies 16-320 (RRVCIFLPND…NSHRLYMNLQ (305 aa)).

Its subcellular location is the cytoplasm. The protein localises to the cell membrane. The chain is FERM domain-containing protein 6 (Frmd6) from Rattus norvegicus (Rat).